A 207-amino-acid polypeptide reads, in one-letter code: Sodium/potassium-transporting ATPase subunit beta-1-interacting protein 1 (207 aa).

Helical transmembrane passes span glycine 2–leucine 22, alanine 35–leucine 55, and leucine 62–phenylalanine 82. The N-linked (GlcNAc...) asparagine glycan is linked to asparagine 100. The helical transmembrane segment at alanine 147 to valine 167 threads the bilayer.

It belongs to the NKAIN family. As to quaternary structure, interacts with atp1b1 C-terminus.

The protein resides in the cell membrane. The polypeptide is Sodium/potassium-transporting ATPase subunit beta-1-interacting protein 1 (nkain1) (Xenopus tropicalis (Western clawed frog)).